Reading from the N-terminus, the 510-residue chain is Cytochrome P450 703A2 (510 aa).

A helical transmembrane segment spans residues 2-22 (ILVLASLFAVLILNVLLWRWL). A heme-binding site is contributed by cysteine 451.

Belongs to the cytochrome P450 family. Heme serves as cofactor.

The protein localises to the membrane. The catalysed reaction is dodecanoate + reduced [NADPH--hemoprotein reductase] + O2 = 7-hydroxydodecanoate + oxidized [NADPH--hemoprotein reductase] + H2O + H(+). Involved in pollen wall development. Catalyzes the conversion of medium-chain saturated fatty acids to the corresponding monohydroxylated fatty acids, with a preferential hydroxylation of lauric acid at the C-7 position. In-chain hydroxylated fatty acids, together with omega-hydroxylated fatty acids, are key monomeric aliphatic building blocks for sporopollenin synthesis during exine formation. This Arabidopsis thaliana (Mouse-ear cress) protein is Cytochrome P450 703A2.